The chain runs to 448 residues: Phosphoglucosamine mutase (448 aa).

The active-site Phosphoserine intermediate is Ser101. Residues Ser101, Asp242, Asp244, and Asp246 each coordinate Mg(2+). Position 101 is a phosphoserine (Ser101).

Belongs to the phosphohexose mutase family. Mg(2+) is required as a cofactor. Activated by phosphorylation.

The enzyme catalyses alpha-D-glucosamine 1-phosphate = D-glucosamine 6-phosphate. In terms of biological role, catalyzes the conversion of glucosamine-6-phosphate to glucosamine-1-phosphate. This chain is Phosphoglucosamine mutase, found in Nitrobacter winogradskyi (strain ATCC 25391 / DSM 10237 / CIP 104748 / NCIMB 11846 / Nb-255).